The chain runs to 270 residues: Ribosomal RNA small subunit methyltransferase A (270 aa).

S-adenosyl-L-methionine is bound by residues Asn15, Ile17, Gly42, Glu64, Asp89, and Asn108.

It belongs to the class I-like SAM-binding methyltransferase superfamily. rRNA adenine N(6)-methyltransferase family. RsmA subfamily.

The protein resides in the cytoplasm. The enzyme catalyses adenosine(1518)/adenosine(1519) in 16S rRNA + 4 S-adenosyl-L-methionine = N(6)-dimethyladenosine(1518)/N(6)-dimethyladenosine(1519) in 16S rRNA + 4 S-adenosyl-L-homocysteine + 4 H(+). Specifically dimethylates two adjacent adenosines (A1518 and A1519) in the loop of a conserved hairpin near the 3'-end of 16S rRNA in the 30S particle. May play a critical role in biogenesis of 30S subunits. The protein is Ribosomal RNA small subunit methyltransferase A of Anaplasma marginale (strain Florida).